A 264-amino-acid chain; its full sequence is uncharacterized protein (264 aa).

8–15 (IQGGTGKT) provides a ligand contact to ATP.

This is an uncharacterized protein from Methanocaldococcus jannaschii (strain ATCC 43067 / DSM 2661 / JAL-1 / JCM 10045 / NBRC 100440) (Methanococcus jannaschii).